A 519-amino-acid chain; its full sequence is Cell division cycle protein 20 homolog B (519 aa).

A compositionally biased stretch (polar residues) spans 79–98 (QSQTRALSSDSFGEEQSTTY). Positions 79 to 133 (QSQTRALSSDSFGEEQSTTYLPEASGSVLKTPPEKETLTLGSRKEQLKTPSKGIS) are disordered. Residues 110 to 125 (PPEKETLTLGSRKEQL) show a composition bias toward basic and acidic residues. WD repeat units follow at residues 229-266 (RNDY…GIEN), 271-310 (LTCN…RLRN), 311-341 (MLGH…YHHD), 353-392 (RHKQ…SAQG), 399-441 (TQST…SIQT), 443-484 (STNS…RSGG), and 487-519 (GHRG…WNCY).

It belongs to the WD repeat CDC20/Fizzy family. Expressed in multiciliated cells (MCCs).

Its subcellular location is the cytoplasm. Its function is as follows. Protein regulator of centriole-deuterosome disengagement and subsequently participates in the ciliogenesis in multiciliated cells (MCCs). The polypeptide is Cell division cycle protein 20 homolog B (Homo sapiens (Human)).